Consider the following 234-residue polypeptide: MATVMELKATARPKSGKGAARAERRAGRVPGVIYGDNQPPLPISVEDKELRLRILAGRFLTTVFDVVLDGKKHRVIPRDYHLDPVKDFPIHVDFLRLGAGATIRVSVPLHLKGLESAPGVKRGGTFNIVTHTVDLEAPAESIPQFIEADVSTLDIGVSLHLSDIALPNGVKSVSREDVTLVTIVPPSGFNEEQKAAAAGAAAPAAAAAPAAKAGAAKAPAAAAKAPAAPAAKKK.

Residues methionine 1–arginine 24 are disordered.

This sequence belongs to the bacterial ribosomal protein bL25 family. CTC subfamily. As to quaternary structure, part of the 50S ribosomal subunit; part of the 5S rRNA/L5/L18/L25 subcomplex. Contacts the 5S rRNA. Binds to the 5S rRNA independently of L5 and L18.

In terms of biological role, this is one of the proteins that binds to the 5S RNA in the ribosome where it forms part of the central protuberance. The sequence is that of Large ribosomal subunit protein bL25 from Rhodopseudomonas palustris (strain BisB5).